The primary structure comprises 387 residues: Sialic acid-binding Ig-like lectin 13 (387 aa).

An N-terminal signal peptide occupies residues 1 to 15; that stretch reads MLPLLLPLLWAGALA. Positions 16–138 constitute an Ig-like V-type domain; the sequence is LEGIFQLEVP…KDPPLSVHVT (123 aa). The Extracellular portion of the chain corresponds to 16-341; that stretch reads LEGIFQLEVP…QRKSGPMAEV (326 aa). Intrachain disulfides connect Cys-35–Cys-168, Cys-40–Cys-100, and Cys-162–Cys-211. An N-linked (GlcNAc...) asparagine glycan is attached at Asn-99. Arg-118 contacts N-acetylneuraminate. Residues 144 to 227 form the Ig-like C2-type 1 domain; it reads PDILIPGALK…AGVTTTRTVR (84 aa). 3 N-linked (GlcNAc...) asparagine glycosylation sites follow: Asn-229, Asn-236, and Asn-254. The Ig-like C2-type 2 domain occupies 234-326; that stretch reads PQNLTLTVFQ…RNPLGSQQVS (93 aa). Cys-270 and Cys-314 are joined by a disulfide. Residues 342-362 traverse the membrane as a helical segment; sequence VLVAIGEAAVKILLLFLCLII. Over 363–387 the chain is Cytoplasmic; the sequence is LRVKSHRRKAAKAATGVEAAKVVKG.

Belongs to the immunoglobulin superfamily. SIGLEC (sialic acid binding Ig-like lectin) family.

Its subcellular location is the membrane. Its function is as follows. Putative adhesion molecule that mediates sialic-acid dependent binding to cells. The chain is Sialic acid-binding Ig-like lectin 13 (SIGLEC13) from Pan troglodytes (Chimpanzee).